The primary structure comprises 330 residues: Peptide transport system ATP-binding protein SapD (330 aa).

In terms of domain architecture, ABC transporter spans 6-259 (IRNLTIEFKT…PHHPYTQALI (254 aa)). 40-47 (GESGSGKS) is a binding site for ATP.

Belongs to the ABC transporter superfamily.

It is found in the cell inner membrane. Its function is as follows. Involved in a peptide intake transport system that plays a role in the resistance to antimicrobial peptides. In Escherichia coli O157:H7, this protein is Peptide transport system ATP-binding protein SapD (sapD).